Here is a 269-residue protein sequence, read N- to C-terminus: uncharacterized protein (269 aa).

Positions 3 to 66 (VDQAAIDEIL…QNLQNLAEGA (64 aa)) form a coiled coil. Positions 83–142 (AQIPEPPKPEPEVEQPETETGPEPEPEAEPELKEVKEDEPPEEDVVRELDESKSAEPIPE) are disordered. The segment covering 94 to 111 (EVEQPETETGPEPEPEAE) has biased composition (acidic residues). The segment covering 112-136 (PELKEVKEDEPPEEDVVRELDESKS) has biased composition (basic and acidic residues).

This is an uncharacterized protein from Archaeoglobus fulgidus (strain ATCC 49558 / DSM 4304 / JCM 9628 / NBRC 100126 / VC-16).